A 132-amino-acid polypeptide reads, in one-letter code: Ribosome-binding factor A (132 aa).

The protein belongs to the RbfA family. In terms of assembly, monomer. Binds 30S ribosomal subunits, but not 50S ribosomal subunits or 70S ribosomes.

It is found in the cytoplasm. One of several proteins that assist in the late maturation steps of the functional core of the 30S ribosomal subunit. Associates with free 30S ribosomal subunits (but not with 30S subunits that are part of 70S ribosomes or polysomes). Required for efficient processing of 16S rRNA. May interact with the 5'-terminal helix region of 16S rRNA. This is Ribosome-binding factor A from Burkholderia lata (strain ATCC 17760 / DSM 23089 / LMG 22485 / NCIMB 9086 / R18194 / 383).